The primary structure comprises 69 residues: Ribosome modulation factor (69 aa).

The protein belongs to the ribosome modulation factor family.

Its subcellular location is the cytoplasm. During stationary phase, converts 70S ribosomes to an inactive dimeric form (100S ribosomes). In Hahella chejuensis (strain KCTC 2396), this protein is Ribosome modulation factor.